Consider the following 165-residue polypeptide: UPF0179 protein Igni_1272 (165 aa).

The protein belongs to the UPF0179 family.

In Ignicoccus hospitalis (strain KIN4/I / DSM 18386 / JCM 14125), this protein is UPF0179 protein Igni_1272.